We begin with the raw amino-acid sequence, 318 residues long: Methenyltetrahydromethanopterin cyclohydrolase (318 aa).

Belongs to the MCH family.

The protein resides in the cytoplasm. The catalysed reaction is 5,10-methenyl-5,6,7,8-tetrahydromethanopterin + H2O = N(5)-formyl-5,6,7,8-tetrahydromethanopterin + H(+). It participates in one-carbon metabolism; methanogenesis from CO(2); 5,10-methenyl-5,6,7,8-tetrahydromethanopterin from CO(2): step 3/3. In terms of biological role, catalyzes the reversible interconversion of 5-formyl-H(4)MPT to methenyl-H(4)MPT(+). The protein is Methenyltetrahydromethanopterin cyclohydrolase of Methanocella arvoryzae (strain DSM 22066 / NBRC 105507 / MRE50).